The primary structure comprises 115 residues: NADH-ubiquinone oxidoreductase chain 3 (115 aa).

Helical transmembrane passes span 3–23 (LMLV…IAFW), 55–75 (FFLV…LLPL), and 87–107 (VLIM…YEWI).

It belongs to the complex I subunit 3 family. As to quaternary structure, core subunit of respiratory chain NADH dehydrogenase (Complex I) which is composed of 45 different subunits. Interacts with TMEM186. Interacts with TMEM242.

The protein localises to the mitochondrion inner membrane. The enzyme catalyses a ubiquinone + NADH + 5 H(+)(in) = a ubiquinol + NAD(+) + 4 H(+)(out). Its function is as follows. Core subunit of the mitochondrial membrane respiratory chain NADH dehydrogenase (Complex I) which catalyzes electron transfer from NADH through the respiratory chain, using ubiquinone as an electron acceptor. Essential for the catalytic activity of complex I. This Oryctolagus cuniculus (Rabbit) protein is NADH-ubiquinone oxidoreductase chain 3.